A 94-amino-acid polypeptide reads, in one-letter code: Fungal defensin scedosporisin-2 (94 aa).

The N-terminal stretch at 1–25 (MKFSNISIAALFTILASTAMAAPAA) is a signal peptide. A propeptide spanning residues 26 to 56 (DSPDSIVAREPAPVEETYEAPSGLEKRGFGC) is cleaved from the precursor. The beta-D-GlcNAc-(1-&gt;4)-Mur2Ac(oyl-L-Ala-gamma-D-Glu-L-Lys-D-Ala-D-Ala)-di-trans,octa-cis-undecaprenyl diphosphate site is built by Phe54, Gly55, and Cys56. 3 disulfides stabilise this stretch: Cys56–Cys78, Cys63–Cys91, and Cys67–Cys93. The interval 57–60 (PGSE) is interaction site with membrane interface. His66 contributes to the beta-D-GlcNAc-(1-&gt;4)-Mur2Ac(oyl-L-Ala-gamma-D-Glu-L-Lys-D-Ala-D-Ala)-di-trans,octa-cis-undecaprenyl diphosphate binding site. Positions 83 to 90 (IPFVGRPR) are interaction site with membrane interface. Cys91 lines the beta-D-GlcNAc-(1-&gt;4)-Mur2Ac(oyl-L-Ala-gamma-D-Glu-L-Lys-D-Ala-D-Ala)-di-trans,octa-cis-undecaprenyl diphosphate pocket.

Belongs to the invertebrate defensin family.

It is found in the secreted. The protein resides in the target cell membrane. Functionally, antibacterial peptide potently active against Gram-positive bacteria. May act by selectively inhibiting peptidoglycan biosynthesis through complex formation with the cell wall precursor lipid II (1:1 molar ratio) thus inhibiting cell wall synthesis. Shows remarkably activity against resistant isolates such as methicillin-resistant Staphylococcus aureus (MRSA) and vancomycin-resistant Enterococci (VRE) at the concentration of micromolar level. Does not act by destroying the membrane integrity, which is consistent with its nonamphiphilic architecture. Acts more rapidly than vancomycin. Shows low hemolysis and cytotoxicity and high serum stability. In vivo, is as efficient as vancomycin to protect mouse peritonitis models from MRSA infections. This Pseudallescheria apiosperma (Scedosporium apiospermum) protein is Fungal defensin scedosporisin-2.